Reading from the N-terminus, the 145-residue chain is uncharacterized protein (145 aa).

The segment covering 1 to 18 (MAEQQPSKEEKKEDKKDE) has biased composition (basic and acidic residues). A disordered region spans residues 1 to 61 (MAEQQPSKEE…CTEGEWDASD (61 aa)).

This is an uncharacterized protein from Caenorhabditis elegans.